The primary structure comprises 156 residues: Small ribosomal subunit protein uS7 (156 aa).

Belongs to the universal ribosomal protein uS7 family. Part of the 30S ribosomal subunit. Contacts proteins S9 and S11.

Its function is as follows. One of the primary rRNA binding proteins, it binds directly to 16S rRNA where it nucleates assembly of the head domain of the 30S subunit. Is located at the subunit interface close to the decoding center, probably blocks exit of the E-site tRNA. The polypeptide is Small ribosomal subunit protein uS7 (Saccharophagus degradans (strain 2-40 / ATCC 43961 / DSM 17024)).